The following is a 311-amino-acid chain: MKVAVLGAAGGIGQALALLLKNRLPAGSELSLYDIAPVTPGVAVDLSHIPTDVKVKGFCGEDPSPALVGADVVLISAGVARKPGMDRSDLFNINAGIVKNLVEKCAASCPKALIGIITNPVNTTVAIAAEVLKKAGVYDKRRLFGVTTLDVIRAETFVAEAKGLNVDKVRVNVIGGHSGVTILPLLSQIEGASFTADEVAAMTKRIQNAGTEVVEAKAGGGSATLSMGQAACRFGLSLIKGLQGEANVIECAYVEGDGKHATFFAQPILLGKNGVETVLDYGKLSAFEQEAMDGMLATLKADIQLGVEFVK.

NAD(+)-binding positions include 7–13 (GAAGGIG) and D34. Substrate contacts are provided by R81 and R87. Residues N94 and 117 to 119 (ITN) each bind NAD(+). Substrate contacts are provided by N119 and R153. The active-site Proton acceptor is the H177. Position 227 (M227) interacts with NAD(+).

It belongs to the LDH/MDH superfamily. MDH type 1 family. In terms of assembly, homodimer.

It catalyses the reaction (S)-malate + NAD(+) = oxaloacetate + NADH + H(+). In terms of biological role, catalyzes the reversible oxidation of malate to oxaloacetate. The protein is Malate dehydrogenase of Aeromonas hydrophila subsp. hydrophila (strain ATCC 7966 / DSM 30187 / BCRC 13018 / CCUG 14551 / JCM 1027 / KCTC 2358 / NCIMB 9240 / NCTC 8049).